The primary structure comprises 332 residues: Ketol-acid reductoisomerase (NAD(+)) (332 aa).

A KARI N-terminal Rossmann domain is found at 1–181 (MKIYYDQDAD…GATRAGVIQT (181 aa)). Residues 24 to 27 (YGSQ), Ser-50, and 82 to 85 (DEKQ) contribute to the NAD(+) site. His-107 is an active-site residue. Gly-133 contributes to the NAD(+) binding site. The region spanning 182–327 (TFKEETETDL…ARLRGMMPWL (146 aa)) is the KARI C-terminal knotted domain. Mg(2+)-binding residues include Asp-190, Glu-194, Glu-226, and Glu-230. Ser-251 contributes to the substrate binding site.

The protein belongs to the ketol-acid reductoisomerase family. The cofactor is Mg(2+).

It catalyses the reaction (2R)-2,3-dihydroxy-3-methylbutanoate + NAD(+) = (2S)-2-acetolactate + NADH + H(+). It participates in amino-acid biosynthesis; L-isoleucine biosynthesis; L-isoleucine from 2-oxobutanoate: step 2/4. Its pathway is amino-acid biosynthesis; L-valine biosynthesis; L-valine from pyruvate: step 2/4. Functionally, involved in the biosynthesis of branched-chain amino acids (BCAA). Catalyzes an alkyl-migration followed by a ketol-acid reduction of (S)-2-acetolactate (S2AL) to yield (R)-2,3-dihydroxy-isovalerate. In the isomerase reaction, S2AL is rearranged via a Mg-dependent methyl migration to produce 3-hydroxy-3-methyl-2-ketobutyrate (HMKB). In the reductase reaction, this 2-ketoacid undergoes a metal-dependent reduction by NADH to yield (R)-2,3-dihydroxy-isovalerate. This Thermacetogenium phaeum (strain ATCC BAA-254 / DSM 26808 / PB) protein is Ketol-acid reductoisomerase (NAD(+)).